Reading from the N-terminus, the 798-residue chain is Tripartite terminase subunit 1 (798 aa).

The C3H1-type zinc finger occupies 191–219 (CFQCYEELMAVPNQGRSINRRMQGLLCDH). Over residues 416-429 (AAGAARSRAEAASG) the composition is skewed to low complexity. The disordered stretch occupies residues 416-458 (AAGAARSRAEAASGAGAGGEEGAGAAAGRGNTGGDEGAGTTTA). Over residues 430 to 452 (AGAGGEEGAGAAAGRGNTGGDEG) the composition is skewed to gly residues. 674 to 681 (YNETFGKQ) contributes to the ATP binding site.

Belongs to the herpesviridae TRM1 protein family. In terms of assembly, associates with TRM2 and TRM3 to form the tripartite terminase complex. Interacts with portal protein.

The protein resides in the host nucleus. In terms of biological role, component of the molecular motor that translocates viral genomic DNA in empty capsid during DNA packaging. Forms a tripartite terminase complex together with TRM2 and TRM3 in the host cytoplasm. Once the complex reaches the host nucleus, it interacts with the capsid portal vertex. This portal forms a ring in which genomic DNA is translocated into the capsid. TRM1 carries an endonuclease activity that plays an important role for the cleavage of concatemeric viral DNA into unit length genomes. This chain is Tripartite terminase subunit 1, found in Murid herpesvirus 1 (strain Smith) (MuHV-1).